Reading from the N-terminus, the 155-residue chain is S-ribosylhomocysteine lyase (155 aa).

3 residues coordinate Fe cation: His-54, His-58, and Cys-122.

Belongs to the LuxS family. As to quaternary structure, homodimer. It depends on Fe cation as a cofactor.

It catalyses the reaction S-(5-deoxy-D-ribos-5-yl)-L-homocysteine = (S)-4,5-dihydroxypentane-2,3-dione + L-homocysteine. In terms of biological role, involved in the synthesis of autoinducer 2 (AI-2) which is secreted by bacteria and is used to communicate both the cell density and the metabolic potential of the environment. The regulation of gene expression in response to changes in cell density is called quorum sensing. Catalyzes the transformation of S-ribosylhomocysteine (RHC) to homocysteine (HC) and 4,5-dihydroxy-2,3-pentadione (DPD). This is S-ribosylhomocysteine lyase from Deinococcus deserti (strain DSM 17065 / CIP 109153 / LMG 22923 / VCD115).